The chain runs to 142 residues: UPF0102 protein Synpcc7942_0312 (142 aa).

Belongs to the UPF0102 family.

This chain is UPF0102 protein Synpcc7942_0312, found in Synechococcus elongatus (strain ATCC 33912 / PCC 7942 / FACHB-805) (Anacystis nidulans R2).